We begin with the raw amino-acid sequence, 181 residues long: Oligoribonuclease (181 aa).

In terms of domain architecture, Exonuclease spans 8 to 171 (LIWIDMEMTG…ADIYDSIEEL (164 aa)). Tyrosine 129 is a catalytic residue.

It belongs to the oligoribonuclease family.

It is found in the cytoplasm. 3'-to-5' exoribonuclease specific for small oligoribonucleotides. This chain is Oligoribonuclease, found in Nitrosomonas eutropha (strain DSM 101675 / C91 / Nm57).